The chain runs to 331 residues: Hydroxyacylglutathione hydrolase 1, mitochondrial (331 aa).

The transit peptide at 1-76 (MPVISKASST…HFCSISNMPS (76 aa)) directs the protein to the mitochondrion. Residues histidine 131 and histidine 133 each contribute to the Zn(2+) site. Residues aspartate 135 and histidine 136 each contribute to the Fe cation site. Positions 189 and 208 each coordinate Zn(2+). Aspartate 208 contacts Fe cation. 246 to 248 (REN) is a binding site for substrate.

Belongs to the metallo-beta-lactamase superfamily. Glyoxalase II family. It depends on Fe(2+) as a cofactor. Fe(3+) serves as cofactor. Zn(2+) is required as a cofactor. Mainly expressed in roots, flowers and flower buds. Also detected in leaves.

Its subcellular location is the mitochondrion. It catalyses the reaction an S-(2-hydroxyacyl)glutathione + H2O = a 2-hydroxy carboxylate + glutathione + H(+). It functions in the pathway secondary metabolite metabolism; methylglyoxal degradation; (R)-lactate from methylglyoxal: step 2/2. Thiolesterase that catalyzes the hydrolysis of S-D-lactoyl-glutathione to form glutathione and D-lactic acid. In Arabidopsis thaliana (Mouse-ear cress), this protein is Hydroxyacylglutathione hydrolase 1, mitochondrial (GLX2-1).